We begin with the raw amino-acid sequence, 137 residues long: Ribosome-binding factor A (137 aa).

It belongs to the RbfA family. In terms of assembly, monomer. Binds 30S ribosomal subunits, but not 50S ribosomal subunits or 70S ribosomes.

Its subcellular location is the cytoplasm. One of several proteins that assist in the late maturation steps of the functional core of the 30S ribosomal subunit. Associates with free 30S ribosomal subunits (but not with 30S subunits that are part of 70S ribosomes or polysomes). Required for efficient processing of 16S rRNA. May interact with the 5'-terminal helix region of 16S rRNA. The polypeptide is Ribosome-binding factor A (Rhodopseudomonas palustris (strain BisB18)).